A 480-amino-acid polypeptide reads, in one-letter code: UDP-N-acetylmuramate--L-alanine ligase (480 aa).

129 to 135 (GTHGKTT) provides a ligand contact to ATP.

Belongs to the MurCDEF family.

The protein localises to the cytoplasm. The enzyme catalyses UDP-N-acetyl-alpha-D-muramate + L-alanine + ATP = UDP-N-acetyl-alpha-D-muramoyl-L-alanine + ADP + phosphate + H(+). It functions in the pathway cell wall biogenesis; peptidoglycan biosynthesis. Functionally, cell wall formation. This is UDP-N-acetylmuramate--L-alanine ligase from Mannheimia succiniciproducens (strain KCTC 0769BP / MBEL55E).